The primary structure comprises 140 residues: FAD synthase (140 aa).

ATP is bound by residues 9–10, 14–17, Asn92, and Tyr119; these read TF and HPGH.

It belongs to the archaeal FAD synthase family. Homodimer. Requires a divalent metal cation as cofactor.

It carries out the reaction FMN + ATP + H(+) = FAD + diphosphate. It functions in the pathway cofactor biosynthesis; FAD biosynthesis; FAD from FMN: step 1/1. Functionally, catalyzes the transfer of the AMP portion of ATP to flavin mononucleotide (FMN) to produce flavin adenine dinucleotide (FAD) coenzyme. This is FAD synthase from Methanocorpusculum labreanum (strain ATCC 43576 / DSM 4855 / Z).